The primary structure comprises 129 residues: Small ribosomal subunit protein uS11 (129 aa).

This sequence belongs to the universal ribosomal protein uS11 family. Part of the 30S ribosomal subunit. Interacts with proteins S7 and S18. Binds to IF-3.

In terms of biological role, located on the platform of the 30S subunit, it bridges several disparate RNA helices of the 16S rRNA. Forms part of the Shine-Dalgarno cleft in the 70S ribosome. This is Small ribosomal subunit protein uS11 from Pseudomonas fluorescens (strain ATCC BAA-477 / NRRL B-23932 / Pf-5).